We begin with the raw amino-acid sequence, 209 residues long: Pyridoxal 5'-phosphate synthase subunit PdxT (209 aa).

Residue 58–60 participates in L-glutamine binding; that stretch reads GES. Residue cysteine 90 is the Nucleophile of the active site. Residues arginine 119 and 148–149 contribute to the L-glutamine site; that span reads IR. Catalysis depends on charge relay system residues histidine 185 and glutamate 187.

This sequence belongs to the glutaminase PdxT/SNO family. As to quaternary structure, in the presence of PdxS, forms a dodecamer of heterodimers. Only shows activity in the heterodimer.

It catalyses the reaction aldehydo-D-ribose 5-phosphate + D-glyceraldehyde 3-phosphate + L-glutamine = pyridoxal 5'-phosphate + L-glutamate + phosphate + 3 H2O + H(+). It carries out the reaction L-glutamine + H2O = L-glutamate + NH4(+). Its pathway is cofactor biosynthesis; pyridoxal 5'-phosphate biosynthesis. Catalyzes the hydrolysis of glutamine to glutamate and ammonia as part of the biosynthesis of pyridoxal 5'-phosphate. The resulting ammonia molecule is channeled to the active site of PdxS. The protein is Pyridoxal 5'-phosphate synthase subunit PdxT of Clavibacter sepedonicus (Clavibacter michiganensis subsp. sepedonicus).